Consider the following 30-residue polypeptide: Acidic phospholipase A2 homolog cannitoxin gamma chain (30 aa).

Heterotrimer of alpha, beta, and gamma chains; non-covalently linked. Glycosylated. In terms of tissue distribution, expressed by the venom gland.

The protein localises to the secreted. Its function is as follows. Heterotrimer: Snake venom phospholipase A2 (PLA2) heterotrimer that acts as a potent presynaptic neurotoxin by blocking synaptic transmission and synaptic vesicle recycling. Enzymatic activity is essential for the neurotoxic effects. May act by binding in a calcium-dependent fashion to neurotonal pentraxin-1 (NPTX1) and neurotonal pentraxin-2 (NPTX2), but not to neuronal pentraxin receptor (NPTXR). Also binds to taipoxin-associated calcium binding protein 49 (RCN2), a protein localized in the lumen of endoplasmic reticulum. In terms of biological role, monomer (gamma chain): Snake venom phospholipase A2 homolog that is neither toxic nor enzymatically active. Does not bind calcium. This is Acidic phospholipase A2 homolog cannitoxin gamma chain from Oxyuranus scutellatus canni (Papuan taipan).